A 360-amino-acid polypeptide reads, in one-letter code: Phospho-N-acetylmuramoyl-pentapeptide-transferase (360 aa).

10 helical membrane-spanning segments follow: residues 21-41, 74-94, 97-117, 135-155, 168-188, 199-219, 236-256, 263-283, 288-308, and 338-358; these read YVTF…LWWG, MGGI…GDLA, YVWV…IDDY, ILQS…ADLV, IMPQ…VGSS, GLAI…AYLS, AGEL…FLWF, VFMG…IAVL, ILLV…ILQV, and VIVR…ATLK.

The protein belongs to the glycosyltransferase 4 family. MraY subfamily. It depends on Mg(2+) as a cofactor.

The protein resides in the cell inner membrane. It catalyses the reaction UDP-N-acetyl-alpha-D-muramoyl-L-alanyl-gamma-D-glutamyl-meso-2,6-diaminopimeloyl-D-alanyl-D-alanine + di-trans,octa-cis-undecaprenyl phosphate = di-trans,octa-cis-undecaprenyl diphospho-N-acetyl-alpha-D-muramoyl-L-alanyl-D-glutamyl-meso-2,6-diaminopimeloyl-D-alanyl-D-alanine + UMP. It participates in cell wall biogenesis; peptidoglycan biosynthesis. Its function is as follows. Catalyzes the initial step of the lipid cycle reactions in the biosynthesis of the cell wall peptidoglycan: transfers peptidoglycan precursor phospho-MurNAc-pentapeptide from UDP-MurNAc-pentapeptide onto the lipid carrier undecaprenyl phosphate, yielding undecaprenyl-pyrophosphoryl-MurNAc-pentapeptide, known as lipid I. This chain is Phospho-N-acetylmuramoyl-pentapeptide-transferase, found in Shewanella sediminis (strain HAW-EB3).